A 248-amino-acid polypeptide reads, in one-letter code: tRNA1(Val) (adenine(37)-N6)-methyltransferase (248 aa).

The protein belongs to the methyltransferase superfamily. tRNA (adenine-N(6)-)-methyltransferase family.

It localises to the cytoplasm. The catalysed reaction is adenosine(37) in tRNA1(Val) + S-adenosyl-L-methionine = N(6)-methyladenosine(37) in tRNA1(Val) + S-adenosyl-L-homocysteine + H(+). Its function is as follows. Specifically methylates the adenine in position 37 of tRNA(1)(Val) (anticodon cmo5UAC). This is tRNA1(Val) (adenine(37)-N6)-methyltransferase from Pectobacterium carotovorum subsp. carotovorum (strain PC1).